The sequence spans 89 residues: Putative protein T-ENOL (89 aa).

2 disordered regions span residues 1 to 31 (MASTSARSGDKKDTWPIQAAASLGGGQKASL) and 54 to 89 (RSHMNPMPDKEKQTKDQGTQISRHVFFTKTRGTDTR).

In terms of tissue distribution, specifically expressed in testis (at protein level).

The sequence is that of Putative protein T-ENOL from Rattus norvegicus (Rat).